The sequence spans 245 residues: 1-(5-phosphoribosyl)-5-[(5-phosphoribosylamino)methylideneamino] imidazole-4-carboxamide isomerase (245 aa).

The active-site Proton acceptor is the aspartate 8. The Proton donor role is filled by aspartate 129.

Belongs to the HisA/HisF family.

Its subcellular location is the cytoplasm. It carries out the reaction 1-(5-phospho-beta-D-ribosyl)-5-[(5-phospho-beta-D-ribosylamino)methylideneamino]imidazole-4-carboxamide = 5-[(5-phospho-1-deoxy-D-ribulos-1-ylimino)methylamino]-1-(5-phospho-beta-D-ribosyl)imidazole-4-carboxamide. The protein operates within amino-acid biosynthesis; L-histidine biosynthesis; L-histidine from 5-phospho-alpha-D-ribose 1-diphosphate: step 4/9. The sequence is that of 1-(5-phosphoribosyl)-5-[(5-phosphoribosylamino)methylideneamino] imidazole-4-carboxamide isomerase from Trichlorobacter lovleyi (strain ATCC BAA-1151 / DSM 17278 / SZ) (Geobacter lovleyi).